We begin with the raw amino-acid sequence, 997 residues long: Malignant fibrous histiocytoma-amplified sequence 1 homolog (997 aa).

14 LRR repeats span residues Ser32 to Gly53, Asp54 to Ser76, Asn79 to Leu100, Arg102 to Leu123, Lys125 to Leu146, Asp148 to Pro170, Ser171 to Val192, Ala194 to Met216, Ser218 to Leu239, Asn241 to Leu262, Lys264 to Val286, Asp287 to Met308, Lys310 to Leu331, and Phe333 to Leu354. The Roc domain occupies Gln393–Arg626. The COR domain maps to Pro637 to Ile861.

Its subcellular location is the cytoplasm. Functionally, probable GTP-binding protein. Functions in innate immunity and more specifically the inflammatory response as a regulator of the Toll-like receptor TLR2 and TLR4 signaling pathways. The sequence is that of Malignant fibrous histiocytoma-amplified sequence 1 homolog (mfhas1) from Xenopus tropicalis (Western clawed frog).